A 354-amino-acid chain; its full sequence is Selection and upkeep of intraepithelial T-cells protein 10 (354 aa).

A signal peptide spans 1 to 52 (MFLRTQMEQSQADIFALIKPHFGVMESSASYLPGFFMTFLLLQTTVLTQAMS). Residues 53–141 (LDIQINIQVP…TNREKKRSVV (89 aa)) form the Ig-like V-type domain. Topologically, residues 53–158 (LDIQINIQVP…SEYMSLMSNK (106 aa)) are extracellular. Cys-71 and Cys-125 are joined by a disulfide. N-linked (GlcNAc...) asparagine glycosylation occurs at Asn-129. The helical transmembrane segment at 159–179 (FSCPLTYLFIIIFLNCLKGML) threads the bilayer. Residues 180 to 209 (DFCCLKGKPVYFRELINKIKEVLNIKMRAC) are Cytoplasmic-facing. Residues 210 to 230 (CTLIWEFLLIVLYIAFLPFYL) form a helical membrane-spanning segment. Residues 231–252 (KFRSRASILDDAYPLHSNWLWD) are Extracellular-facing. Residues 253–273 (ICIVLSVLMIFFTGLSLFLLW) traverse the membrane as a helical segment. Over 274 to 354 (TLNCYGQMSY…RLDCSLNWKT (81 aa)) the chain is Cytoplasmic.

Belongs to the SKINT family. In terms of tissue distribution, expressed in skin and thymus.

The protein resides in the membrane. In terms of biological role, may act by engaging a cell surface molecule on immature T-cells in the embryonic thymus. The protein is Selection and upkeep of intraepithelial T-cells protein 10 (Skint10) of Mus musculus (Mouse).